The sequence spans 350 residues: MIRTNFFLKQARRHEVKAKSSKKHRSDDTVDRDHSDKIRDRLNSSENGDEKHRRKEKRSSRGKSYSRSRSRERRHRSRSHDRRKSRSRSREKKRRPRSRSRSRSKHRHRSKSRSKSREKKKRIEKPRRHSRSRSQTPPSPPAFRGRNAAMDAQEALARRLERAKKLQEQREKESAEKQQEIAAVAAAGGGSVINVAALLASGTQVTPQIAMAAQMAALQAKALAQTGISVPSYYNPAAVNPMKFAEQEKKRKMLWQGKKEGDKSQSAEIWEKLNFGNKDQNVKFRKLMGIKHEEEAGTSSVDAESFKTLKQQEEMFRNMDAQYEMARSQTHTQRGMGLGFTSSMRGMDAV.

Disordered regions lie at residues 1 to 146 (MIRT…FRGR) and 328 to 350 (SQTH…MDAV). The span at 10–24 (QARRHEVKAKSSKKH) shows a compositional bias: basic residues. Over residues 25–51 (RSDDTVDRDHSDKIRDRLNSSENGDEK) the composition is skewed to basic and acidic residues. Basic residues predominate over residues 52–132 (HRRKEKRSSR…IEKPRRHSRS (81 aa)). Residues 146 to 187 (RNAAMDAQEALARRLERAKKLQEQREKESAEKQQEIAAVAAA) adopt a coiled-coil conformation.

The protein belongs to the RSRC2 family.

This is Arginine/serine-rich coiled-coil protein 2 (rsrc2) from Xenopus laevis (African clawed frog).